The following is a 137-amino-acid chain: Small ribosomal subunit protein uS12 (137 aa).

The interval 1-57 is disordered; sequence MPTINQLVRKPRKSKVKKSKSPALNVGYNSRKKVQTNVSSPQKRGVATRVGTMTPKK. A compositionally biased stretch (basic residues) spans 9–20; sequence RKPRKSKVKKSK. D102 is modified (3-methylthioaspartic acid).

The protein belongs to the universal ribosomal protein uS12 family. Part of the 30S ribosomal subunit. Contacts proteins S8 and S17. May interact with IF1 in the 30S initiation complex.

Its function is as follows. With S4 and S5 plays an important role in translational accuracy. In terms of biological role, interacts with and stabilizes bases of the 16S rRNA that are involved in tRNA selection in the A site and with the mRNA backbone. Located at the interface of the 30S and 50S subunits, it traverses the body of the 30S subunit contacting proteins on the other side and probably holding the rRNA structure together. The combined cluster of proteins S8, S12 and S17 appears to hold together the shoulder and platform of the 30S subunit. The sequence is that of Small ribosomal subunit protein uS12 from Streptococcus suis (strain 05ZYH33).